Here is a 1055-residue protein sequence, read N- to C-terminus: Cellulose synthase A catalytic subunit 9 [UDP-forming] (1055 aa).

Topologically, residues 1–268 (MEASAGLVAG…ASSKVNPYRM (268 aa)) are cytoplasmic. Cys-37, Cys-40, Cys-56, Cys-59, Cys-64, Cys-67, Cys-79, and Cys-82 together coordinate Zn(2+). Residues 37 to 83 (CEICGDEVGRTVDGDLFVACNECGFPVCRPCYEYERREGTQNCPQCK) form an RING-type; degenerate zinc finger. A helical transmembrane segment spans residues 269 to 289 (VIILRLVVLGFFLRYRILHPV). The Extracellular segment spans residues 290–291 (PD). A helical membrane pass occupies residues 292–312 (AIPLWLTSIICEIWFAVSWIL). Over 313 to 831 (DQFPKWYPID…LERFSYINTT (519 aa)) the chain is Cytoplasmic. UDP-alpha-D-glucose contacts are provided by Ser-351, Lys-357, Glu-358, and Asp-387. Residue Asp-387 is part of the active site. Residues 439–468 (NFVQERRAMKREYEEFKVRINALVAKAQKV) are a coiled coil. Lys-528 serves as a coordination point for UDP-alpha-D-glucose. Mn(2+)-binding residues include Lys-529 and Asp-553. Asp-753 is an active-site residue. A helical membrane pass occupies residues 832-852 (IYPFTSLPLLAYCTLPAVCLL). The Extracellular segment spans residues 853-860 (TGKFIMPP). The helical transmembrane segment at 861–881 (ISTFASLFFIALFISIFATGI) threads the bilayer. The Cytoplasmic portion of the chain corresponds to 882–899 (LEMRWSGVSIEEWWRNEQ). A helical membrane pass occupies residues 900–920 (FWVIGGVSAHLFAVVQGLLKV). At 921–951 (LAGIDTNFTVTSKATGDEDDEFAELYAFKWT) the chain is on the extracellular side. Residue Asn-927 is glycosylated (N-linked (GlcNAc...) asparagine). The helical transmembrane segment at 952–972 (TLLIPPTTLLILNIIGVVAGV) threads the bilayer. Over 973–983 (SDAINNGSEAW) the chain is Cytoplasmic. Residues 984–1004 (GPLFGKLFFAFWVIVHLYPFL) form a helical membrane-spanning segment. Topologically, residues 1005–1013 (KGLMGRQNR) are extracellular. Residues 1014–1034 (TPTIVVIWSVLLASIFSLLWV) form a helical membrane-spanning segment. The Cytoplasmic segment spans residues 1035–1055 (RIDPFTIKARGPDVRQCGINC).

The protein belongs to the glycosyltransferase 2 family. Plant cellulose synthase subfamily. Mn(2+) serves as cofactor. The cofactor is Zn(2+).

The protein resides in the cell membrane. It catalyses the reaction [(1-&gt;4)-beta-D-glucosyl](n) + UDP-alpha-D-glucose = [(1-&gt;4)-beta-D-glucosyl](n+1) + UDP + H(+). Its pathway is glycan metabolism; plant cellulose biosynthesis. In terms of biological role, catalytic subunit of cellulose synthase terminal complexes ('rosettes'), required for beta-1,4-glucan microfibril crystallization, a major mechanism of the cell wall formation. Involved in the secondary cell wall formation. The chain is Cellulose synthase A catalytic subunit 9 [UDP-forming] (CESA9) from Oryza sativa subsp. indica (Rice).